Here is a 201-residue protein sequence, read N- to C-terminus: MNAFYNKEGVGDTLLISLQDVTREQLGYEKHGDVVKIFNNETKETTGFNIFNASSYLTIDENGPVALSETFVQDVNEILNRNGVEETLVVDLSPKFVVGYVESKEKHPNADKLSVCKVNVGEETLQIVCGAPNVDQGQKVVVAKVGAVMPSGLVIKDAELRGVPSSGMICSAKELDLPDAPAEKGILVLEGDYEAGDAFQF.

The tRNA-binding domain occupies 90–200 (VDLSPKFVVG…GDYEAGDAFQ (111 aa)).

The protein is Putative tRNA-binding protein YtpR (ytpR) of Bacillus subtilis (strain 168).